Here is an 88-residue protein sequence, read N- to C-terminus: Fe-S protein maturation auxiliary factor SufT (88 aa).

The protein belongs to the MIP18 family.

Involved in the maturation of iron-sulfur (Fe-S) proteins. May function as a Fe-S cluster carrier. Is required for S.aureus growth under conditions that impose a high demand for lipoic acid, likely via a role in the maturation of the lipoate synthase LipA. Is non-essential for growth in conditions that impose a low demand for lipoic acid or Fe-S clusters, such as fermentative growth. Also seems to be involved in the maturation of AcnA, LeuCD and IlvD proteins, that utilize Fe-S cluster cofactors, and its role increases under conditions of high-demand for Fe-S clusters (respiratory growth). Is not involved in the repair of Fe-S clusters damaged by reactive oxygen species or in the physical protection of Fe-S clusters from oxidants. Displays synergy with the Fe-S cluster carrier Nfu. The chain is Fe-S protein maturation auxiliary factor SufT from Staphylococcus aureus (strain USA300).